Reading from the N-terminus, the 352-residue chain is 4-hydroxy-2-oxovalerate aldolase 4 (352 aa).

The Pyruvate carboxyltransferase domain maps to 9 to 261; it reads IRVTDSSLRD…RTGIDTLKII (253 aa). Substrate is bound at residue 17–18; the sequence is RD. A Mn(2+)-binding site is contributed by Asp18. His21 functions as the Proton acceptor in the catalytic mechanism. Substrate contacts are provided by Ser171 and His200. Mn(2+) is bound by residues His200 and His202. Tyr291 contacts substrate.

Belongs to the 4-hydroxy-2-oxovalerate aldolase family.

It catalyses the reaction (S)-4-hydroxy-2-oxopentanoate = acetaldehyde + pyruvate. The sequence is that of 4-hydroxy-2-oxovalerate aldolase 4 from Rhodococcus jostii (strain RHA1).